A 158-amino-acid polypeptide reads, in one-letter code: SsrA-binding protein (158 aa).

It belongs to the SmpB family.

The protein resides in the cytoplasm. Required for rescue of stalled ribosomes mediated by trans-translation. Binds to transfer-messenger RNA (tmRNA), required for stable association of tmRNA with ribosomes. tmRNA and SmpB together mimic tRNA shape, replacing the anticodon stem-loop with SmpB. tmRNA is encoded by the ssrA gene; the 2 termini fold to resemble tRNA(Ala) and it encodes a 'tag peptide', a short internal open reading frame. During trans-translation Ala-aminoacylated tmRNA acts like a tRNA, entering the A-site of stalled ribosomes, displacing the stalled mRNA. The ribosome then switches to translate the ORF on the tmRNA; the nascent peptide is terminated with the 'tag peptide' encoded by the tmRNA and targeted for degradation. The ribosome is freed to recommence translation, which seems to be the essential function of trans-translation. This chain is SsrA-binding protein, found in Psychrobacter sp. (strain PRwf-1).